The sequence spans 93 residues: Pyrimidine/purine nucleoside phosphorylase (93 aa).

This sequence belongs to the nucleoside phosphorylase PpnP family.

It catalyses the reaction a purine D-ribonucleoside + phosphate = a purine nucleobase + alpha-D-ribose 1-phosphate. The enzyme catalyses adenosine + phosphate = alpha-D-ribose 1-phosphate + adenine. The catalysed reaction is cytidine + phosphate = cytosine + alpha-D-ribose 1-phosphate. It carries out the reaction guanosine + phosphate = alpha-D-ribose 1-phosphate + guanine. It catalyses the reaction inosine + phosphate = alpha-D-ribose 1-phosphate + hypoxanthine. The enzyme catalyses thymidine + phosphate = 2-deoxy-alpha-D-ribose 1-phosphate + thymine. The catalysed reaction is uridine + phosphate = alpha-D-ribose 1-phosphate + uracil. It carries out the reaction xanthosine + phosphate = alpha-D-ribose 1-phosphate + xanthine. Functionally, catalyzes the phosphorolysis of diverse nucleosides, yielding D-ribose 1-phosphate and the respective free bases. Can use uridine, adenosine, guanosine, cytidine, thymidine, inosine and xanthosine as substrates. Also catalyzes the reverse reactions. This is Pyrimidine/purine nucleoside phosphorylase from Pseudomonas paraeruginosa (strain DSM 24068 / PA7) (Pseudomonas aeruginosa (strain PA7)).